The sequence spans 246 residues: Ribosomal RNA small subunit methyltransferase J (246 aa).

S-adenosyl-L-methionine-binding positions include 115–116 (ER) and Asp-169.

The protein belongs to the methyltransferase superfamily. RsmJ family.

The protein localises to the cytoplasm. The catalysed reaction is guanosine(1516) in 16S rRNA + S-adenosyl-L-methionine = N(2)-methylguanosine(1516) in 16S rRNA + S-adenosyl-L-homocysteine + H(+). Specifically methylates the guanosine in position 1516 of 16S rRNA. The chain is Ribosomal RNA small subunit methyltransferase J from Buchnera aphidicola subsp. Acyrthosiphon pisum (strain Tuc7).